A 307-amino-acid polypeptide reads, in one-letter code: uncharacterized protein (307 aa).

This is an uncharacterized protein from Rickettsia conorii (strain ATCC VR-613 / Malish 7).